A 430-amino-acid chain; its full sequence is MTSVVVVGTQWGDEGKGKITDFLSSDAEVIARYQGGDNAGHTIVIDNKKFKLHLIPSGIFFPEKISVIGNGVVVNPKSLVKELAYLHEEGVTTDNLRISDRAHVILPYHIKLDQLQEEAKGDNKIGTTIKGIGPAYMDKAARVGIRIADLLDRDIFAERLKTNLAEKNRLFEKMYDSAPIAFDEIFEEYYGYGQEIKKYVTDTSVILNDALDAGKRVLFEGAQGVMLDIDQGTYPFVTSSNPVAGGVTIGSGVGPSKINKVVGVCKAYTSRVGDGPFPTELFDEVGERIREIGHEYGTTTGRPRRVGWFDSVVMRHSRRVSGITNLSLNSIDVLSGLETVKICVAYDLDGKRIDHYPASLEQLKRCKPIYEELPGWSEDITGVRSLEDLPENARNYVRRIGELVGVRISTFSVGPGREQTNILESVWATI.

GTP-binding positions include 12–18 and 40–42; these read GDEGKGK and GHT. The Proton acceptor role is filled by Asp-13. 2 residues coordinate Mg(2+): Asp-13 and Gly-40. IMP contacts are provided by residues 13–16, 38–41, Thr-128, Arg-142, Gln-223, Thr-238, and Arg-302; these read DEGK and NAGH. Residue His-41 is the Proton donor of the active site. 298 to 304 contributes to the substrate binding site; the sequence is TTTGRPR. GTP is bound by residues Arg-304, 330–332, and 412–414; these read SID and SVG.

It belongs to the adenylosuccinate synthetase family. As to quaternary structure, homodimer. It depends on Mg(2+) as a cofactor.

The protein resides in the cytoplasm. The enzyme catalyses IMP + L-aspartate + GTP = N(6)-(1,2-dicarboxyethyl)-AMP + GDP + phosphate + 2 H(+). It participates in purine metabolism; AMP biosynthesis via de novo pathway; AMP from IMP: step 1/2. Functionally, plays an important role in the de novo pathway of purine nucleotide biosynthesis. Catalyzes the first committed step in the biosynthesis of AMP from IMP. The polypeptide is Adenylosuccinate synthetase (Streptococcus equi subsp. zooepidemicus (strain H70)).